Consider the following 525-residue polypeptide: Cytochrome P450 703A2 (525 aa).

Residues 3–23 form a helical membrane-spanning segment; that stretch reads PFLLSIILCSWIFVVVSWKKL. Residue C455 participates in heme binding.

It belongs to the cytochrome P450 family. Heme is required as a cofactor.

The protein resides in the membrane. It catalyses the reaction dodecanoate + reduced [NADPH--hemoprotein reductase] + O2 = 7-hydroxydodecanoate + oxidized [NADPH--hemoprotein reductase] + H2O + H(+). Its function is as follows. Involved in pollen exine and anther epicuticular layer development. Catalyzes the in-chain hydroxylation of lauric acid (C12:0) preferentially on position 7, generating 7-hydroxylated lauric acid. Does not possess activity with other fatty acids (C14:0, C16:0, C16:1, and C18:0). Participates in a conserved pathway of in-chain hydroxylation of lauric acid required for anther cuticle and pollen exine formation. Directly regulated by TDR, a known regulator of tapetum programmed cell death (PCD) and pollen exine formation. The chain is Cytochrome P450 703A2 from Oryza sativa subsp. japonica (Rice).